An 840-amino-acid polypeptide reads, in one-letter code: MAAHILKDVVAYVEVWSSNGTENYSKTFTTQLVDMGAKVSKTFNKQVTHVIFKDGYQSTWDKAQKRGVKLVSVLWVEKCRTAGAHIDESLFPAINTNEHLPSLIKKKRKCMQPKDFNFKTPENDKRFQKKFEKMAKELQRQKTSLDDDVPILLFESSGSLTYSPTIKINSSHHSAMEKRLQEMKEKRENLSPSSSQMIQQSHDNPSNSLCEAPLNISRDTLCSDESFAGGVHSSFDDLCGNSGCGNQERKLGGSINDIESDMCISSLVLKANNIHSSPSFTHLDKSSPQKFLSNLSKEEINLQRNIAGKIVTPDQKQAAGMSQETFEEKYRLSPTLSSTKGHLLIRSRPSSSSVKRQRVSHGSHSPSKGKSKRKRSIRRSIMPRLQLCRSEGSLQHVAGPALKALSCGESSYDDYFSPDNLKERNSENLPPTSQLPSSLAQFSCRSLSKKERTSIFEMSDFSCIGKKTRTVDITSFTAKTISSPQKTANGEGRATLSCVTSEESSAPGETLRCCRQAGKEDACPEGNGFSYTIEDPPFPKGHDGDLTPLEGSLEEVKEAVGLKSTQNKGTTSKISNSSEGEAQSEHEPCFIVDCNMETSTEEKENLPGGYGGSVKNRPTRHDLLDDSCDSFKDLIKPHEELKKSGRGKKPTRTLVMTSMPSEKQNVVIQVVDKLKGFSIAPDVCETTTHVLSGKPLRTLNVLLGIARGCWVLSYDWVLWSLELGHWISEEPFELSNHFPAAPLCRSECHLSAGPYRGTLFADQPVMFVSPASSPPVAKLCELVHLCGGRVSQVPRQASIVIGPYSGKKKATVKYLSEKWVLDSIIQHKVCASENYLLPQR.

The BRCT 1 domain maps to 1 to 93; the sequence is MAAHILKDVV…AHIDESLFPA (93 aa). A disordered region spans residues 184–206; it reads KEKRENLSPSSSQMIQQSHDNPS. The segment covering 190–206 has biased composition (polar residues); sequence LSPSSSQMIQQSHDNPS. 4 positions are modified to phosphoserine: S279, S287, S296, and S333. Disordered regions lie at residues 313–379 and 418–437; these read PDQK…SIRR and PDNL…QLPS. A Phosphothreonine modification is found at T335. Positions 355-378 are enriched in basic residues; that stretch reads KRQRVSHGSHSPSKGKSKRKRSIR. A compositionally biased stretch (polar residues) spans 427–437; that stretch reads ENLPPTSQLPS. S552 is modified (phosphoserine). The disordered stretch occupies residues 562-586; that stretch reads LKSTQNKGTTSKISNSSEGEAQSEH. The span at 563–581 shows a compositional bias: polar residues; it reads KSTQNKGTTSKISNSSEGE. BRCT domains follow at residues 644–734 and 755–837; these read SGRG…PFEL and YRGT…NYLL.

In terms of assembly, interacts with CDC27 and maybe other components of the APC/C complex. Interacts with histone variant H2AX under DNA damage conditions.

It localises to the cytoplasm. The protein resides in the cytoskeleton. The protein localises to the microtubule organizing center. It is found in the centrosome. Its function is as follows. Implicated in chromosome condensation and DNA damage induced cellular responses. May play a role in neurogenesis and regulation of the size of the cerebral cortex. The protein is Microcephalin of Hylobates lar (Lar gibbon).